Here is a 680-residue protein sequence, read N- to C-terminus: DNA-directed RNA polymerase subunit beta' (680 aa).

The Zn(2+) site is built by cysteine 69, cysteine 71, cysteine 87, and cysteine 90. Mg(2+)-binding residues include aspartate 489, aspartate 491, and aspartate 493.

Belongs to the RNA polymerase beta' chain family. RpoC1 subfamily. As to quaternary structure, in plastids the minimal PEP RNA polymerase catalytic core is composed of four subunits: alpha, beta, beta', and beta''. When a (nuclear-encoded) sigma factor is associated with the core the holoenzyme is formed, which can initiate transcription. It depends on Mg(2+) as a cofactor. Requires Zn(2+) as cofactor.

Its subcellular location is the plastid. The protein localises to the chloroplast. It catalyses the reaction RNA(n) + a ribonucleoside 5'-triphosphate = RNA(n+1) + diphosphate. DNA-dependent RNA polymerase catalyzes the transcription of DNA into RNA using the four ribonucleoside triphosphates as substrates. The protein is DNA-directed RNA polymerase subunit beta' of Arabidopsis thaliana (Mouse-ear cress).